Consider the following 603-residue polypeptide: MTTAPIDNIRNFSIVAHIDHGKSTLADRLIQITGGMSDREMAGKEQVLDSMDIERERGITIKAQTVRLNYRAKDGKDYIFNLMDTPGHVDFAYEVSRSLAACEGSLLVVDASQGVEAQTLANVYHALDAGHEIVPVLNKVDLPAAEPDKVKQQIEDVIGLDASDAVMISAKTGLGVPDVLEAIVTRLPPPQGDRSAQLKALLVDSWYDVYLGVVVLVRVVDGVMKKGQRIRMMGTNAAYDLERVGYFTPKMTSVDELGPGEIGFITAAIKEVADTRVGDTITDDRKPITEMLPGFKPAIPVVFCGLFPVDADDFETLRGAMGKLRLNDASFSFEMETSAALGFGFRCGFLGLLHLEIIQERLSREFDLNLIATAPSVIYKMTLTDGTEMEIHNPVDMPDVVKIAEIQEPWIEATILTPDEYLGSVLKLCQDRRGNQKELTYVGARAMVKYDLPLNEVVFDFYDRLKSVSKGYASFDYHLTEYKPADLVKMQILVNAEPVDALSMLVHRTRAEGRGRAMVEKMKELIPPHMFVIPIQAAIGGKIIARETVRALRKDVTAKCYGGDITRKRKLLEKQKEGKKKMRQFGKVDIPQEAFIAALKVDS.

The tr-type G domain maps to Asp7–Gln191. Residues Asp19–Thr24 and Asn138–Asp141 each bind GTP.

It belongs to the TRAFAC class translation factor GTPase superfamily. Classic translation factor GTPase family. LepA subfamily.

It localises to the cell inner membrane. It catalyses the reaction GTP + H2O = GDP + phosphate + H(+). Required for accurate and efficient protein synthesis under certain stress conditions. May act as a fidelity factor of the translation reaction, by catalyzing a one-codon backward translocation of tRNAs on improperly translocated ribosomes. Back-translocation proceeds from a post-translocation (POST) complex to a pre-translocation (PRE) complex, thus giving elongation factor G a second chance to translocate the tRNAs correctly. Binds to ribosomes in a GTP-dependent manner. The protein is Elongation factor 4 of Rhodopseudomonas palustris (strain HaA2).